Reading from the N-terminus, the 102-residue chain is NADH-quinone oxidoreductase subunit K (102 aa).

3 helical membrane passes run 5-25 (ITHYLTVSALMFTIGIAGIFL), 31-51 (IIILMSIELILLSVNINFVAF), and 66-86 (FVLTVAAAEAAIGLAILVVFF).

The protein belongs to the complex I subunit 4L family. In terms of assembly, NDH-1 is composed of 14 different subunits. Subunits NuoA, H, J, K, L, M, N constitute the membrane sector of the complex.

The protein localises to the cell inner membrane. The enzyme catalyses a quinone + NADH + 5 H(+)(in) = a quinol + NAD(+) + 4 H(+)(out). Its function is as follows. NDH-1 shuttles electrons from NADH, via FMN and iron-sulfur (Fe-S) centers, to quinones in the respiratory chain. The immediate electron acceptor for the enzyme in this species is believed to be ubiquinone. Couples the redox reaction to proton translocation (for every two electrons transferred, four hydrogen ions are translocated across the cytoplasmic membrane), and thus conserves the redox energy in a proton gradient. This is NADH-quinone oxidoreductase subunit K from Bartonella tribocorum (strain CIP 105476 / IBS 506).